The chain runs to 456 residues: CBL-interacting protein kinase 16 (456 aa).

The 256-residue stretch at 22-277 folds into the Protein kinase domain; it reads YELGRLLGQG…IPEIMRTPWF (256 aa). ATP contacts are provided by residues 28–36 and lysine 51; that span reads LGQGTFAKV. Residue aspartate 145 is the Proton acceptor of the active site. Residues 163–192 form an activation loop region; the sequence is DFGLAALPEQLRQDGLLHTQCGTPAYVAPE. One can recognise an NAF domain in the interval 309 to 335; the sequence is AMSPRTCNAFQLISSMSSGFDLSGMFE. The segment at 339–368 is PPI; the sequence is KAATVFTSRAPAATVIQKLEAVGRSLGYSA.

It belongs to the protein kinase superfamily. CAMK Ser/Thr protein kinase family. SNF1 subfamily. Mn(2+) is required as a cofactor.

The enzyme catalyses L-seryl-[protein] + ATP = O-phospho-L-seryl-[protein] + ADP + H(+). It catalyses the reaction L-threonyl-[protein] + ATP = O-phospho-L-threonyl-[protein] + ADP + H(+). In terms of biological role, CIPK serine-threonine protein kinases interact with CBL proteins. Binding of a CBL protein to the regulatory NAF domain of CIPK protein lead to the activation of the kinase in a calcium-dependent manner. In Oryza sativa subsp. japonica (Rice), this protein is CBL-interacting protein kinase 16 (CIPK16).